Here is a 449-residue protein sequence, read N- to C-terminus: Gamma conglutin 1 (449 aa).

Residues 1–33 (MARNMAHILHILVISLSYSFLFVSSSSQDSQSL) form the signal peptide. Residues 60-429 (HWANIHKRTP…DLERSRVGFN (370 aa)) form the Peptidase A1 domain. 5 cysteine pairs are disulfide-bonded: Cys-88–Cys-178, Cys-102–Cys-115, Cys-107–Cys-133, Cys-118–Cys-128, and Cys-350–Cys-391. A glycan (N-linked (GlcNAc...) asparagine) is linked at Asn-130.

The protein belongs to the peptidase A1 family. As to quaternary structure, two-subunit monomeric unit made of alpha and beta subunits coupled by disulfide bonds (at pH 4.5 and under non-reducing conditions). Can also form oligomers including dimer, tetramer and cyclic hexamer (trimer of dimers) (at pH &gt; 5.5). Component of globulins complexes which accumulate in seeds. Interacts with flavonoids (e.g. apigenin glucosides) present in globulins complexes. Forms a static complex with vitexin. Post-translationally, undergoes very complex post-translational maturation; the proteolytic processing leading to the formation of two alpha and beta subunits is incomplete, leaving a certain amount of the protein in an uncut form. Glycosylated on alpha chain. Expressed in developing cotyledons and in the embryonic axis of germinating seeds. Accumulates in seeds, especially in the protein bodies of developing cotyledonary cells (at protein level). Also detected, at low levels, in plumules and radicles.

It localises to the secreted. The protein resides in the extracellular space. Sulfur-rich seed storage protein that remains undegraded at germination. This Lupinus angustifolius (Narrow-leaved blue lupine) protein is Gamma conglutin 1.